The sequence spans 236 residues: MSKYSVLLPTYNERKNLPIITYLIAKTFDQEKLDWEIVIIDDASPDGTQEVAKELQKIYGEDKILLKPRSGKLGLGTAYIHGLKFATGDFVIIMDADFSHHPKYLPEFIKLQKEHNYDIVLGTRYAKDGGVYGWNLKRKFISRGANLLASTVLGTGVSDVTGSFRLYKKPVLETLMSEVTSKGYVFQMEIIARAREHNYTIGEVPIAFVDRLYGESKLGMDDILGYLKGVFSLLFI.

Proline 9, tyrosine 11, glutamate 13, isoleucine 40, aspartate 42, aspartate 95, alanine 96, aspartate 97, arginine 124, valine 160, arginine 211, and lysine 217 together coordinate GDP-alpha-D-mannose. Residue aspartate 97 coordinates Mg(2+). Aspartate 97 serves as a coordination point for Mn(2+).

Belongs to the glycosyltransferase 2 family. Component of the dolichol-phosphate mannose (DPM) synthase complex composed of dpm1, dpm2 and dpm3. The cofactor is Mg(2+). Mn(2+) is required as a cofactor. It depends on Ca(2+) as a cofactor.

The protein resides in the endoplasmic reticulum. The catalysed reaction is a di-trans,poly-cis-dolichyl phosphate + GDP-alpha-D-mannose = a di-trans,poly-cis-dolichyl beta-D-mannosyl phosphate + GDP. Its pathway is protein modification; protein glycosylation. Its function is as follows. Transfers mannose from GDP-mannose to dolichol monophosphate to form dolichol phosphate mannose (Dol-P-Man) which is the mannosyl donor in pathways leading to N-glycosylation, glycosyl phosphatidylinositol membrane anchoring, and O-mannosylation of proteins. The sequence is that of Dolichol-phosphate mannosyltransferase from Schizosaccharomyces pombe (strain 972 / ATCC 24843) (Fission yeast).